The primary structure comprises 311 residues: Probable branched-chain-amino-acid aminotransferase (311 aa).

Lys160 is subject to N6-(pyridoxal phosphate)lysine.

This sequence belongs to the class-IV pyridoxal-phosphate-dependent aminotransferase family. It depends on pyridoxal 5'-phosphate as a cofactor.

The enzyme catalyses L-leucine + 2-oxoglutarate = 4-methyl-2-oxopentanoate + L-glutamate. It carries out the reaction L-isoleucine + 2-oxoglutarate = (S)-3-methyl-2-oxopentanoate + L-glutamate. The catalysed reaction is L-valine + 2-oxoglutarate = 3-methyl-2-oxobutanoate + L-glutamate. The protein operates within amino-acid biosynthesis; L-isoleucine biosynthesis; L-isoleucine from 2-oxobutanoate: step 4/4. Its pathway is amino-acid biosynthesis; L-leucine biosynthesis; L-leucine from 3-methyl-2-oxobutanoate: step 4/4. It functions in the pathway amino-acid biosynthesis; L-valine biosynthesis; L-valine from pyruvate: step 4/4. Its function is as follows. Acts on leucine, isoleucine and valine. The protein is Probable branched-chain-amino-acid aminotransferase (ilvE) of Aquifex aeolicus (strain VF5).